A 580-amino-acid polypeptide reads, in one-letter code: Type II methyltransferase M.BanIII (580 aa).

Belongs to the N(4)/N(6)-methyltransferase family.

It carries out the reaction a 2'-deoxyadenosine in DNA + S-adenosyl-L-methionine = an N(6)-methyl-2'-deoxyadenosine in DNA + S-adenosyl-L-homocysteine + H(+). Functionally, a gamma subtype methylase, recognizes the double-stranded sequence 5'-ATCGAT-3', methylates A-5 on both strands, and protects the DNA from cleavage by the BanIII endonuclease. This Aneurinibacillus aneurinilyticus (Bacillus aneurinolyticus) protein is Type II methyltransferase M.BanIII (banIIIM).